The primary structure comprises 417 residues: UDP-N-acetylglucosamine 1-carboxyvinyltransferase (417 aa).

Phosphoenolpyruvate is bound at residue 22-23 (KN). Arg92 is a UDP-N-acetyl-alpha-D-glucosamine binding site. Cys116 serves as the catalytic Proton donor. The residue at position 116 (Cys116) is a 2-(S-cysteinyl)pyruvic acid O-phosphothioketal. 2 residues coordinate UDP-N-acetyl-alpha-D-glucosamine: Asp304 and Ile326.

This sequence belongs to the EPSP synthase family. MurA subfamily.

It is found in the cytoplasm. The enzyme catalyses phosphoenolpyruvate + UDP-N-acetyl-alpha-D-glucosamine = UDP-N-acetyl-3-O-(1-carboxyvinyl)-alpha-D-glucosamine + phosphate. The protein operates within cell wall biogenesis; peptidoglycan biosynthesis. Cell wall formation. Adds enolpyruvyl to UDP-N-acetylglucosamine. The protein is UDP-N-acetylglucosamine 1-carboxyvinyltransferase of Geotalea uraniireducens (strain Rf4) (Geobacter uraniireducens).